The primary structure comprises 845 residues: Protein translocase subunit SecA (845 aa).

ATP contacts are provided by residues Q88, 106–110 (GEGKT), and D495. Residues 804-838 (SNRANRPQKKAKRQPIVKPDKPGRNDPCPCGSGKK) are disordered. The span at 809 to 818 (RPQKKAKRQP) shows a compositional bias: basic residues. Positions 831, 833, 842, and 843 each coordinate Zn(2+).

This sequence belongs to the SecA family. In terms of assembly, monomer and homodimer. Part of the essential Sec protein translocation apparatus which comprises SecA, SecYEG and auxiliary proteins SecDF. Other proteins may also be involved. The cofactor is Zn(2+).

It is found in the cell inner membrane. The protein resides in the cytoplasm. It catalyses the reaction ATP + H2O + cellular proteinSide 1 = ADP + phosphate + cellular proteinSide 2.. In terms of biological role, part of the Sec protein translocase complex. Interacts with the SecYEG preprotein conducting channel. Has a central role in coupling the hydrolysis of ATP to the transfer of proteins into and across the cell membrane, serving as an ATP-driven molecular motor driving the stepwise translocation of polypeptide chains across the membrane. This is Protein translocase subunit SecA from Halothermothrix orenii (strain H 168 / OCM 544 / DSM 9562).